A 333-amino-acid chain; its full sequence is Acetyl-coenzyme A carboxylase carboxyl transferase subunit alpha (333 aa).

In terms of domain architecture, CoA carboxyltransferase C-terminal spans 48–308 (ALEVKVETLR…KEMLIEELRI (261 aa)).

This sequence belongs to the AccA family. In terms of assembly, acetyl-CoA carboxylase is a heterohexamer composed of biotin carboxyl carrier protein (AccB), biotin carboxylase (AccC) and two subunits each of ACCase subunit alpha (AccA) and ACCase subunit beta (AccD).

Its subcellular location is the cytoplasm. The enzyme catalyses N(6)-carboxybiotinyl-L-lysyl-[protein] + acetyl-CoA = N(6)-biotinyl-L-lysyl-[protein] + malonyl-CoA. The protein operates within lipid metabolism; malonyl-CoA biosynthesis; malonyl-CoA from acetyl-CoA: step 1/1. Functionally, component of the acetyl coenzyme A carboxylase (ACC) complex. First, biotin carboxylase catalyzes the carboxylation of biotin on its carrier protein (BCCP) and then the CO(2) group is transferred by the carboxyltransferase to acetyl-CoA to form malonyl-CoA. This chain is Acetyl-coenzyme A carboxylase carboxyl transferase subunit alpha, found in Chlorobium phaeobacteroides (strain DSM 266 / SMG 266 / 2430).